Here is a 153-residue protein sequence, read N- to C-terminus: 3-hydroxyacyl-[acyl-carrier-protein] dehydratase FabZ (153 aa).

His-54 is an active-site residue.

This sequence belongs to the thioester dehydratase family. FabZ subfamily.

It localises to the cytoplasm. The enzyme catalyses a (3R)-hydroxyacyl-[ACP] = a (2E)-enoyl-[ACP] + H2O. Its function is as follows. Involved in unsaturated fatty acids biosynthesis. Catalyzes the dehydration of short chain beta-hydroxyacyl-ACPs and long chain saturated and unsaturated beta-hydroxyacyl-ACPs. The protein is 3-hydroxyacyl-[acyl-carrier-protein] dehydratase FabZ of Shewanella sediminis (strain HAW-EB3).